The chain runs to 199 residues: Holliday junction branch migration complex subunit RuvA (199 aa).

Positions 1-63 are domain I; it reads MIGCLIGEVF…EDAQQLYGFS (63 aa). A domain II region spans residues 64–142; that stretch reads DAQEKTIFRT…TLAQGTSSAA (79 aa). The segment at 143-150 is flexible linker; sequence ALPQIQFV. The tract at residues 150–199 is domain III; that stretch reads VSNSPVAEAEAALQSLGYKPLEAQKAVAAVKADYTESADIIRAALKSMMK.

It belongs to the RuvA family. As to quaternary structure, homotetramer. Forms an RuvA(8)-RuvB(12)-Holliday junction (HJ) complex. HJ DNA is sandwiched between 2 RuvA tetramers; dsDNA enters through RuvA and exits via RuvB. An RuvB hexamer assembles on each DNA strand where it exits the tetramer. Each RuvB hexamer is contacted by two RuvA subunits (via domain III) on 2 adjacent RuvB subunits; this complex drives branch migration. In the full resolvosome a probable DNA-RuvA(4)-RuvB(12)-RuvC(2) complex forms which resolves the HJ.

The protein resides in the cytoplasm. In terms of biological role, the RuvA-RuvB-RuvC complex processes Holliday junction (HJ) DNA during genetic recombination and DNA repair, while the RuvA-RuvB complex plays an important role in the rescue of blocked DNA replication forks via replication fork reversal (RFR). RuvA specifically binds to HJ cruciform DNA, conferring on it an open structure. The RuvB hexamer acts as an ATP-dependent pump, pulling dsDNA into and through the RuvAB complex. HJ branch migration allows RuvC to scan DNA until it finds its consensus sequence, where it cleaves and resolves the cruciform DNA. This Acinetobacter baumannii (strain AB307-0294) protein is Holliday junction branch migration complex subunit RuvA.